Here is a 1185-residue protein sequence, read N- to C-terminus: DNA-directed RNA polymerase subunit beta' (1185 aa).

Zn(2+) is bound by residues Cys-67, Cys-69, Cys-82, and Cys-85. 3 residues coordinate Mg(2+): Asp-457, Asp-459, and Asp-461. Cys-802, Cys-876, Cys-883, and Cys-886 together coordinate Zn(2+).

The protein belongs to the RNA polymerase beta' chain family. In terms of assembly, the RNAP catalytic core consists of 2 alpha, 1 beta, 1 beta' and 1 omega subunit. When a sigma factor is associated with the core the holoenzyme is formed, which can initiate transcription. Mg(2+) serves as cofactor. The cofactor is Zn(2+).

It catalyses the reaction RNA(n) + a ribonucleoside 5'-triphosphate = RNA(n+1) + diphosphate. Its function is as follows. DNA-dependent RNA polymerase catalyzes the transcription of DNA into RNA using the four ribonucleoside triphosphates as substrates. The chain is DNA-directed RNA polymerase subunit beta' from Clostridium novyi (strain NT).